A 301-amino-acid chain; its full sequence is MSEEKSYCGFVAIVGRPNVGKSTLLNKLLGQKISITSRKAQTTRHRIVGIHTEGPYQAIYVDTPGLHMEEKRAINRLMNKAASSSIGDVELVIFVVEGTRWTQDDEMVLNKLRDAKAPVILAVNKVDNVQEKADLLPHLQFLASQMNFLDIVPISAETGTNVDTIAAIVRKHLPEAIHHFPEDYITDRSQRFMASEIIREKLMRFLGAELPYSVTVEIERFVSNERGGYDINGLILVEREGQKKMVIGNKGAKIKTIGIEARKDMQEMFEAPVHLELWVKVKSGWADDERALRSLGYVDDL.

Positions 7–175 constitute an Era-type G domain; the sequence is YCGFVAIVGR…AAIVRKHLPE (169 aa). The tract at residues 15-22 is G1; sequence GRPNVGKS. A GTP-binding site is contributed by 15-22; that stretch reads GRPNVGKS. The G2 stretch occupies residues 41–45; that stretch reads QTTRH. The tract at residues 62–65 is G3; the sequence is DTPG. GTP contacts are provided by residues 62–66 and 124–127; these read DTPGL and NKVD. The interval 124 to 127 is G4; it reads NKVD. The G5 stretch occupies residues 154–156; that stretch reads ISA. One can recognise a KH type-2 domain in the interval 206–283; sequence LGAELPYSVT…HLELWVKVKS (78 aa).

This sequence belongs to the TRAFAC class TrmE-Era-EngA-EngB-Septin-like GTPase superfamily. Era GTPase family. Monomer.

It localises to the cytoplasm. The protein resides in the cell inner membrane. Its function is as follows. An essential GTPase that binds both GDP and GTP, with rapid nucleotide exchange. Plays a role in 16S rRNA processing and 30S ribosomal subunit biogenesis and possibly also in cell cycle regulation and energy metabolism. The sequence is that of GTPase Era from Klebsiella pneumoniae subsp. pneumoniae (strain ATCC 700721 / MGH 78578).